A 467-amino-acid chain; its full sequence is Glutamate--tRNA ligase (467 aa).

The short motif at 9–19 is the 'HIGH' region element; the sequence is PSPTGYLHIGG. The short motif at 237–241 is the 'KMSKS' region element; it reads KLSKR. K240 lines the ATP pocket.

This sequence belongs to the class-I aminoacyl-tRNA synthetase family. Glutamate--tRNA ligase type 1 subfamily. Monomer.

It localises to the cytoplasm. It catalyses the reaction tRNA(Glu) + L-glutamate + ATP = L-glutamyl-tRNA(Glu) + AMP + diphosphate. Its function is as follows. Catalyzes the attachment of glutamate to tRNA(Glu) in a two-step reaction: glutamate is first activated by ATP to form Glu-AMP and then transferred to the acceptor end of tRNA(Glu). The chain is Glutamate--tRNA ligase from Xanthomonas campestris pv. campestris (strain 8004).